We begin with the raw amino-acid sequence, 361 residues long: Mycothiol acetyltransferase (361 aa).

N-acetyltransferase domains are found at residues 25 to 173 (PRVR…LPGS) and 195 to 361 (VTVL…AWKF). Residue Glu59 coordinates 1D-myo-inositol 2-(L-cysteinylamino)-2-deoxy-alpha-D-glucopyranoside. 98-100 (LAV) contributes to the acetyl-CoA binding site. Glu229, Lys280, and Glu295 together coordinate 1D-myo-inositol 2-(L-cysteinylamino)-2-deoxy-alpha-D-glucopyranoside. Residues 299 to 301 (IGL) and 306 to 312 (QGRGLGR) contribute to the acetyl-CoA site. 1D-myo-inositol 2-(L-cysteinylamino)-2-deoxy-alpha-D-glucopyranoside is bound at residue Tyr333. An acetyl-CoA-binding site is contributed by 338 to 343 (NAPAVH).

This sequence belongs to the acetyltransferase family. MshD subfamily. In terms of assembly, monomer.

It catalyses the reaction 1D-myo-inositol 2-(L-cysteinylamino)-2-deoxy-alpha-D-glucopyranoside + acetyl-CoA = mycothiol + CoA + H(+). In terms of biological role, catalyzes the transfer of acetyl from acetyl-CoA to desacetylmycothiol (Cys-GlcN-Ins) to form mycothiol. This is Mycothiol acetyltransferase from Corynebacterium kroppenstedtii (strain DSM 44385 / JCM 11950 / CIP 105744 / CCUG 35717).